A 584-amino-acid chain; its full sequence is Proteasome-associated ATPase (584 aa).

Positions glutamate 16 to proline 91 form a coiled coil. Glycine 273 to leucine 278 provides a ligand contact to ATP. The segment at tyrosine 583–leucine 584 is docks into pockets in the proteasome alpha-ring.

The protein belongs to the AAA ATPase family. In terms of assembly, homohexamer. Assembles into a hexameric ring structure that caps the 20S proteasome core. Strongly interacts with the prokaryotic ubiquitin-like protein Pup through a hydrophobic interface; the interacting region of ARC lies in its N-terminal coiled-coil domain. There is one Pup binding site per ARC hexamer ring. Upon ATP-binding, the C-terminus of ARC interacts with the alpha-rings of the proteasome core, possibly by binding to the intersubunit pockets.

Its pathway is protein degradation; proteasomal Pup-dependent pathway. Functionally, ATPase which is responsible for recognizing, binding, unfolding and translocation of pupylated proteins into the bacterial 20S proteasome core particle. May be essential for opening the gate of the 20S proteasome via an interaction with its C-terminus, thereby allowing substrate entry and access to the site of proteolysis. Thus, the C-termini of the proteasomal ATPase may function like a 'key in a lock' to induce gate opening and therefore regulate proteolysis. The protein is Proteasome-associated ATPase of Nocardioides sp. (strain ATCC BAA-499 / JS614).